A 1288-amino-acid polypeptide reads, in one-letter code: Mitogen-activated protein kinase kinase kinase 6 (1288 aa).

In terms of domain architecture, Protein kinase spans 648–906 (TGERLVLGKG…AQTLLGDPFL (259 aa)). ATP-binding positions include 654 to 662 (LGKGTYGVV) and K677. D771 acts as the Proton acceptor in catalysis. Phosphothreonine is present on T806. The segment at 899 to 997 (TLLGDPFLQP…SSGLSLLHQE (99 aa)) is disordered. Positions 914-952 (SPSSPRHAPRPSDAPSASPTPSANSTTQSQTFPCPQAPS) are enriched in low complexity. Phosphoserine is present on residues S964 and S984. The span at 980–989 (EEPASPEESS) shows a compositional bias: low complexity. Positions 1004–1029 (LAAVLEQELPALAENLHQEQKQEQGA) form a coiled coil. Over residues 1123–1134 (VEKEAVSPRSEE) the composition is skewed to basic and acidic residues. The segment at 1123–1157 (VEKEAVSPRSEELSNEGDSQQSPGQQSPLPVEPEQ) is disordered. Residues S1129 and S1149 each carry the phosphoserine modification. A compositionally biased stretch (low complexity) spans 1141 to 1151 (SQQSPGQQSPL). A coiled-coil region spans residues 1166 to 1205 (LSLLRAETDRLREILAGKEREYQALVQRALQRLNEEARTY).

The protein belongs to the protein kinase superfamily. STE Ser/Thr protein kinase family. MAP kinase kinase kinase subfamily. In terms of assembly, binds both upstream activators and downstream substrates in multimolecular complexes. Mg(2+) serves as cofactor.

The catalysed reaction is L-seryl-[protein] + ATP = O-phospho-L-seryl-[protein] + ADP + H(+). It carries out the reaction L-threonyl-[protein] + ATP = O-phospho-L-threonyl-[protein] + ADP + H(+). With respect to regulation, activated by phosphorylation on Thr-806. Catalytically active only when complexed with MAP3K5, with MAP3K5 supporting the stability and the active configuration of MAP3K6 and MAP3K6 activating MAP3K5 by direct phosphorylation. Functionally, component of a protein kinase signal transduction cascade. Activates the JNK, but not ERK or p38 kinase pathways. This Homo sapiens (Human) protein is Mitogen-activated protein kinase kinase kinase 6 (MAP3K6).